Consider the following 159-residue polypeptide: Phosphopantetheine adenylyltransferase (159 aa).

Residue Ser8 participates in substrate binding. ATP contacts are provided by residues 8 to 9 (SF) and His16. Substrate is bound by residues Lys40, Thr72, and Arg86. ATP contacts are provided by residues 87–89 (GLR), Glu97, and 122–128 (HSFVSSS).

This sequence belongs to the bacterial CoaD family. Homohexamer. The cofactor is Mg(2+).

The protein resides in the cytoplasm. It catalyses the reaction (R)-4'-phosphopantetheine + ATP + H(+) = 3'-dephospho-CoA + diphosphate. The protein operates within cofactor biosynthesis; coenzyme A biosynthesis; CoA from (R)-pantothenate: step 4/5. Its function is as follows. Reversibly transfers an adenylyl group from ATP to 4'-phosphopantetheine, yielding dephospho-CoA (dPCoA) and pyrophosphate. This is Phosphopantetheine adenylyltransferase from Synechococcus sp. (strain JA-2-3B'a(2-13)) (Cyanobacteria bacterium Yellowstone B-Prime).